The following is a 219-amino-acid chain: Probable GTP-binding protein EngB (219 aa).

Residues 24-207 form the EngB-type G domain; the sequence is VQPEVAFAGR…HALIESWVRP (184 aa). GTP contacts are provided by residues 32-39, 59-63, 81-84, 148-151, and 185-188; these read GRSNAGKS, GRTQH, DLPG, TKCD, and LFSA. Residues Ser-39 and Thr-61 each coordinate Mg(2+).

The protein belongs to the TRAFAC class TrmE-Era-EngA-EngB-Septin-like GTPase superfamily. EngB GTPase family. Mg(2+) serves as cofactor.

Its function is as follows. Necessary for normal cell division and for the maintenance of normal septation. This is Probable GTP-binding protein EngB from Burkholderia mallei (strain ATCC 23344).